The sequence spans 217 residues: Small ribosomal subunit protein uS5 (217 aa).

The 64-residue stretch at 49 to 112 (LEEKVLDVKL…AQAKKNIIRV (64 aa)) folds into the S5 DRBM domain.

It belongs to the universal ribosomal protein uS5 family. As to quaternary structure, part of the 30S ribosomal subunit. Contacts protein S4.

In terms of biological role, with S4 and S12 plays an important role in translational accuracy. This is Small ribosomal subunit protein uS5 from Methanocaldococcus jannaschii (strain ATCC 43067 / DSM 2661 / JAL-1 / JCM 10045 / NBRC 100440) (Methanococcus jannaschii).